We begin with the raw amino-acid sequence, 306 residues long: D-alanine--D-alanine ligase (306 aa).

An ATP-grasp domain is found at 107–300 (KAAYRTAGLP…FGQLCAWLVE (194 aa)). Residue 134–184 (IAPPYVVKPNNEGSSVGIYIVHEATNSPPQLSEEMPAQVMVEAYAPGREMT) participates in ATP binding. Mg(2+) contacts are provided by Asp251, Glu267, and Asn269.

Belongs to the D-alanine--D-alanine ligase family. Mg(2+) serves as cofactor. It depends on Mn(2+) as a cofactor.

It localises to the cytoplasm. The catalysed reaction is 2 D-alanine + ATP = D-alanyl-D-alanine + ADP + phosphate + H(+). Its pathway is cell wall biogenesis; peptidoglycan biosynthesis. In terms of biological role, cell wall formation. The sequence is that of D-alanine--D-alanine ligase from Ruegeria sp. (strain TM1040) (Silicibacter sp.).